The following is a 569-amino-acid chain: Proline--tRNA ligase (569 aa).

The protein belongs to the class-II aminoacyl-tRNA synthetase family. ProS type 1 subfamily. Homodimer.

Its subcellular location is the cytoplasm. The enzyme catalyses tRNA(Pro) + L-proline + ATP = L-prolyl-tRNA(Pro) + AMP + diphosphate. Its function is as follows. Catalyzes the attachment of proline to tRNA(Pro) in a two-step reaction: proline is first activated by ATP to form Pro-AMP and then transferred to the acceptor end of tRNA(Pro). As ProRS can inadvertently accommodate and process non-cognate amino acids such as alanine and cysteine, to avoid such errors it has two additional distinct editing activities against alanine. One activity is designated as 'pretransfer' editing and involves the tRNA(Pro)-independent hydrolysis of activated Ala-AMP. The other activity is designated 'posttransfer' editing and involves deacylation of mischarged Ala-tRNA(Pro). The misacylated Cys-tRNA(Pro) is not edited by ProRS. The protein is Proline--tRNA ligase of Campylobacter jejuni subsp. jejuni serotype O:2 (strain ATCC 700819 / NCTC 11168).